The following is a 78-amino-acid chain: Putative membrane protein insertion efficiency factor (78 aa).

Belongs to the UPF0161 family.

The protein localises to the cell inner membrane. Functionally, could be involved in insertion of integral membrane proteins into the membrane. The protein is Putative membrane protein insertion efficiency factor of Prochlorococcus marinus (strain MIT 9301).